The chain runs to 587 residues: L-ascorbate oxidase (587 aa).

A signal peptide spans 1–33 (MAKVADKPFFPKPFLSFLVLSIIFGFGITLSEA). Plastocyanin-like domains are found at residues 38–157 (IKHY…LIVD) and 169–335 (DEEI…NYLP). 3 disulfides stabilise this stretch: Cys-54-Cys-236, Cys-116-Cys-574, and Cys-215-Cys-228. Residues His-95, His-97, His-139, and His-141 each contribute to the Cu cation site. N-linked (GlcNAc...) asparagine glycosylation is found at Asn-360, Asn-401, and Asn-475. The Plastocyanin-like 3 domain maps to 379–559 (NRRLFLLNTQ…HMGMGVVFAE (181 aa)). The Cu cation site is built by His-480, His-483, His-485, His-542, Cys-543, His-544, His-548, and Met-553.

This sequence belongs to the multicopper oxidase family. As to quaternary structure, dimer. Requires Cu cation as cofactor.

Its subcellular location is the secreted. The enzyme catalyses 4 L-ascorbate + O2 = 4 monodehydro-L-ascorbate radical + 2 H2O. Functionally, may be involved in a redox system involving ascorbic acid. In Cucumis sativus (Cucumber), this protein is L-ascorbate oxidase.